We begin with the raw amino-acid sequence, 184 residues long: CASP-like protein 1U1 (184 aa).

At 1-30 (MSSTGTTLSASEGDKGFRNGAAPAKSKSHS) the chain is on the cytoplasmic side. The chain crosses the membrane as a helical span at residues 31–51 (TIALLRLLAFAATLSAFVTMI). Over 52-76 (TNKQKITIGPFTRWSKWHYSDAFMW) the chain is Extracellular. Residues 77–97 (FVVANCIAFIYLLFAAILGLI) form a helical membrane-spanning segment. Topologically, residues 98-111 (SHSPMLVKHLVILD) are cytoplasmic. Residues 112-132 (LIVSYMLFSAASAATAVAYIG) form a helical membrane-spanning segment. The Extracellular portion of the chain corresponds to 133–154 (KNGISQPGWTAICGVFERYCHH). Residues 155–175 (VAGALVACFLGWLFLTIAVFL) form a helical membrane-spanning segment. Over 176 to 184 (GMRRSPAAV) the chain is Cytoplasmic.

The protein belongs to the Casparian strip membrane proteins (CASP) family. Homodimer and heterodimers.

It is found in the cell membrane. This Marchantia polymorpha (Common liverwort) protein is CASP-like protein 1U1.